The sequence spans 256 residues: Photosystem I chlorophyll a/b-binding protein 5, chloroplastic (256 aa).

A chloroplast-targeting transit peptide spans 1-32 (MAVVLRGGITGGFLHHRRDASSVITRRISSVK). Residue alanine 33 is modified to N-acetylalanine. Tryptophan 49 serves as a coordination point for chlorophyll b. Chlorophyll a-binding residues include phenylalanine 69 and glutamate 88. Arginine 93 is a binding site for chlorophyll b. Helical transmembrane passes span 94-113 (FAMLGVAGILFTDLLRTTGI) and 129-146 (FASTKTLIVVQFLLMGFA). 2 residues coordinate chlorophyll b: glutamate 147 and arginine 150. Positions 205, 206, 209, 211, 223, and 238 each coordinate chlorophyll a. A helical transmembrane segment spans residues 212–232 (LAMMAMLGFFVQASVTHTGPI).

This sequence belongs to the light-harvesting chlorophyll a/b-binding (LHC) protein family. As to quaternary structure, the LHC complex consists of chlorophyll a-b binding proteins. Homodimer. Heterodimer with LHCA2 and, possibly, LHCA3. Can substitute to LHCA4 to form a complex with LHCA1. Binds pigments. Element of the NAD(P)H dehydrogenase-photosystem I supercomplex (NDH-PSI). It depends on Binds at least 14 chlorophylls (8 Chl-a and 6 Chl-b) and carotenoids such as lutein and neoxanthin. as a cofactor. Post-translationally, photoregulated by reversible phosphorylation of its threonine residues.

The protein localises to the plastid. It is found in the chloroplast thylakoid membrane. Functionally, the light-harvesting complex (LHC) functions as a light receptor, it captures and delivers excitation energy to photosystems with which it is closely associated. Seems involved in the function of the photosystem I in low light conditions, when other LHCA proteins are less abundant. Required, together with LHCA6, for the formation of a full-size NAD(P)H dehydrogenase-photosystem I supercomplex (NDH-PSI) that triggers cyclic and chlororespiratory electron transport in chloroplast thylakoids, especially under stress conditions (e.g. increased light intensity). In Arabidopsis thaliana (Mouse-ear cress), this protein is Photosystem I chlorophyll a/b-binding protein 5, chloroplastic.